Consider the following 613-residue polypeptide: SNW/SKI-interacting protein (613 aa).

Residues 135–170 (EGDLGTVVDEEEELQKEIQETAEETKAAIEKIVNVR) are a coiled coil. The tract at residues 186–350 (SQYIKYKPSQ…KARSERTGAA (165 aa)) is SNW. Disordered regions lie at residues 219 to 252 (LDPP…TVKD), 315 to 437 (MRSK…RDRD), and 513 to 613 (DEQL…SDRR). 2 positions are modified to phosphoserine: serine 235 and serine 243. The span at 236–247 (PPVPVMHSPPRP) shows a compositional bias: pro residues. 5 stretches are compositionally biased toward basic and acidic residues: residues 315–335 (MRSK…EQEL), 358–437 (DRGR…RDRD), 515–529 (QLDK…KPDK), 538–548 (VGSKRDRPVEF), and 562–574 (WVSD…KPLD). Coiled coils occupy residues 318-349 (KVQK…RTGA) and 391-421 (REER…DAKD). Over residues 577–590 (GSGGTMRASGGGGS) the composition is skewed to gly residues. A compositionally biased stretch (basic and acidic residues) spans 592-613 (SRDDDHGGSGRTKINFERSDRR).

Belongs to the SNW family. In terms of assembly, component of the spliceosome. Interacts with SR45. Expressed in roots, stems, seedlings, siliques, cotyledons, leaves, inflorescences, seeds and shoot apical meristem.

Its subcellular location is the nucleus speckle. Functionally, splicing factor involved in post-transcriptional regulation of circadian clock and flowering time genes. Associates with the pre-mRNA of PRR7, PRR9, ELF3 and GI, and is necessary for the regulation of their alternative splicing and mRNA maturation. Probably involved in splice site recognition. This is SNW/SKI-interacting protein (SKIP) from Arabidopsis thaliana (Mouse-ear cress).